Here is a 576-residue protein sequence, read N- to C-terminus: (+)-alpha-terpineol synthase (576 aa).

Arginine 286, aspartate 323, aspartate 327, arginine 466, and asparagine 469 together coordinate (2E)-geranyl diphosphate. Residues aspartate 323 and aspartate 327 each coordinate Mg(2+). The DDXXD motif motif lies at 323-327 (DDVYD). Residues asparagine 469, threonine 473, and glutamate 477 each coordinate Mg(2+).

The protein belongs to the terpene synthase family. Tpsb subfamily. Requires Mg(2+) as cofactor. Mn(2+) serves as cofactor.

The enzyme catalyses (2E,6E)-farnesyl diphosphate = beta-bisabolene + diphosphate. It carries out the reaction (2E)-geranyl diphosphate + H2O = (R)-alpha-terpineol + diphosphate. It catalyses the reaction (2E)-geranyl diphosphate = (4S)-limonene + diphosphate. Its pathway is secondary metabolite biosynthesis; terpenoid biosynthesis. In terms of biological role, monoterpene synthase which catalyzes the conversion of (2E)-geranyl diphosphate (GPP) to (R)-alpha-terpineol and (4S)-limonene, as well as small quantities of linalool, myrcene, (-)-alpha-pinene, (+)-sabinene and geraniol. To a lower extent, catalyzes the conversion of (2E,6E)-farnesyl diphosphate (FPP) to beta-bisabolene. The polypeptide is (+)-alpha-terpineol synthase (Santalum album (White sandalwood)).